A 318-amino-acid polypeptide reads, in one-letter code: Tyrosine recombinase XerD (318 aa).

The Core-binding (CB) domain occupies 5-90 (PSDAKLTGLF…AMRHLYRFLL (86 aa)). The Tyr recombinase domain occupies 111 to 310 (GLPKVLSIAD…VEERLKSLVR (200 aa)). Catalysis depends on residues Arg161, Lys185, His262, Arg265, and His288. Tyr297 acts as the O-(3'-phospho-DNA)-tyrosine intermediate in catalysis.

The protein belongs to the 'phage' integrase family. XerD subfamily. In terms of assembly, forms a cyclic heterotetrameric complex composed of two molecules of XerC and two molecules of XerD.

It is found in the cytoplasm. Functionally, site-specific tyrosine recombinase, which acts by catalyzing the cutting and rejoining of the recombining DNA molecules. The XerC-XerD complex is essential to convert dimers of the bacterial chromosome into monomers to permit their segregation at cell division. It also contributes to the segregational stability of plasmids. This is Tyrosine recombinase XerD from Bradyrhizobium diazoefficiens (strain JCM 10833 / BCRC 13528 / IAM 13628 / NBRC 14792 / USDA 110).